The following is a 435-amino-acid chain: Serine/threonine-protein kinase 40 (435 aa).

The Protein kinase domain occupies 35 to 332 (FILGPRLGNS…EELDSLSSII (298 aa)). Residues 41–49 (LGNSPVPSI) and K66 each bind ATP. The active-site Proton acceptor is D197.

Belongs to the protein kinase superfamily. CAMK Ser/Thr protein kinase family.

Its subcellular location is the nucleus. The protein localises to the cytoplasm. It carries out the reaction L-seryl-[protein] + ATP = O-phospho-L-seryl-[protein] + ADP + H(+). The enzyme catalyses L-threonyl-[protein] + ATP = O-phospho-L-threonyl-[protein] + ADP + H(+). In terms of biological role, may be a negative regulator of NF-kappa-B and p53-mediated gene transcription. The sequence is that of Serine/threonine-protein kinase 40 (STK40) from Gallus gallus (Chicken).